A 202-amino-acid chain; its full sequence is Small ribosomal subunit protein uS4c (202 aa).

The tract at residues Gly20–Ser43 is disordered. Residues Met90 to Tyr152 form the S4 RNA-binding domain.

The protein belongs to the universal ribosomal protein uS4 family. As to quaternary structure, part of the 30S ribosomal subunit. Contacts protein S5. The interaction surface between S4 and S5 is involved in control of translational fidelity.

The protein resides in the plastid. The protein localises to the chloroplast. Its function is as follows. One of the primary rRNA binding proteins, it binds directly to 16S rRNA where it nucleates assembly of the body of the 30S subunit. Functionally, with S5 and S12 plays an important role in translational accuracy. The protein is Small ribosomal subunit protein uS4c (rps4) of Rhodomonas salina (Cryptomonas salina).